A 501-amino-acid polypeptide reads, in one-letter code: Mitogen-activated protein kinase 16 (501 aa).

The Protein kinase domain occupies 22–313 (YEVTEVVGKG…AAEALTDPYF (292 aa)). Residues 28–36 (VGKGSYGVV) and lysine 51 each bind ATP. The active-site Proton acceptor is the aspartate 148. Position 184 is a phosphothreonine (threonine 184). The TXY motif lies at 184 to 186 (TDY). Tyrosine 186 carries the phosphotyrosine modification. A disordered region spans residues 477–501 (DEESMSEYMNEAADGVPHKIAQLKT).

It belongs to the protein kinase superfamily. CMGC Ser/Thr protein kinase family. MAP kinase subfamily. In terms of processing, dually phosphorylated on Thr-184 and Tyr-186, which activates the enzyme.

The catalysed reaction is L-seryl-[protein] + ATP = O-phospho-L-seryl-[protein] + ADP + H(+). It carries out the reaction L-threonyl-[protein] + ATP = O-phospho-L-threonyl-[protein] + ADP + H(+). Its activity is regulated as follows. Activated by threonine and tyrosine phosphorylation. The protein is Mitogen-activated protein kinase 16 (MPK16) of Oryza sativa subsp. japonica (Rice).